The primary structure comprises 275 residues: Tryptophan synthase alpha chain (275 aa).

Residues Glu51 and Asp62 each act as proton acceptor in the active site.

The protein belongs to the TrpA family. Tetramer of two alpha and two beta chains.

It carries out the reaction (1S,2R)-1-C-(indol-3-yl)glycerol 3-phosphate + L-serine = D-glyceraldehyde 3-phosphate + L-tryptophan + H2O. Its pathway is amino-acid biosynthesis; L-tryptophan biosynthesis; L-tryptophan from chorismate: step 5/5. Its function is as follows. The alpha subunit is responsible for the aldol cleavage of indoleglycerol phosphate to indole and glyceraldehyde 3-phosphate. The protein is Tryptophan synthase alpha chain of Methanopyrus kandleri (strain AV19 / DSM 6324 / JCM 9639 / NBRC 100938).